The following is a 269-amino-acid chain: MISKINFVKMHGLGNDCVIVNKRDLLNAHNLSQLAKNIADRHTGIGCDQFIIYENHNNFYEMIIYNIDGSSAKLCGNATRCLAKLIYLDTGKKDITIVVGNKELLCRIEDENKISVNVGAVSFNETWMPSRDKIWAFAARYMIDLKETICVDVGNPHLVIFSKLESQDQKIVGETLQAKELFANGVNVNFAEIKDNKINLSVWERGVGLTGACGSGACGSFAAGLKRGFIHSPSTVVFKHGSLNMKEENGNIIMQGSATLIAEGVYCCE.

Substrate contacts are provided by asparagine 15, glutamine 49, and asparagine 66. Catalysis depends on cysteine 75, which acts as the Proton donor. Substrate is bound by residues 76–77 (GN), asparagine 155, asparagine 187, and 204–205 (ER). Catalysis depends on cysteine 213, which acts as the Proton acceptor. 214–215 (GS) provides a ligand contact to substrate.

This sequence belongs to the diaminopimelate epimerase family. As to quaternary structure, homodimer.

Its subcellular location is the cytoplasm. The enzyme catalyses (2S,6S)-2,6-diaminopimelate = meso-2,6-diaminopimelate. It functions in the pathway amino-acid biosynthesis; L-lysine biosynthesis via DAP pathway; DL-2,6-diaminopimelate from LL-2,6-diaminopimelate: step 1/1. Its function is as follows. Catalyzes the stereoinversion of LL-2,6-diaminopimelate (L,L-DAP) to meso-diaminopimelate (meso-DAP), a precursor of L-lysine and an essential component of the bacterial peptidoglycan. The chain is Diaminopimelate epimerase from Rickettsia canadensis (strain McKiel).